The following is a 918-amino-acid chain: Serine/threonine-protein kinase D1 (918 aa).

At Tyr93 the chain carries Phosphotyrosine. A Phorbol-ester/DAG-type 1 zinc finger spans residues 144-194 (PHALFVHSYRAPAFCDHCGEMLWGLVRQGLKCEGCGLNYHKRCAFKIPNNC). Ser203, Ser206, Ser217, and Ser221 each carry phosphoserine. Residues 276-326 (PHTFVIHSYTRPTVCQFCKKLLKGLFRQGLQCKDCRFNCHKRCAPKVPNNC) form a Phorbol-ester/DAG-type 2 zinc finger. 2 disordered regions span residues 338-362 (SPGAESDVVMEEGSDDNDSERNSGL) and 379-410 (AEGQSGGAEMQDPDADQEDSNRTISPSTSNNI). The span at 345–355 (VVMEEGSDDND) shows a compositional bias: acidic residues. Residue Ser351 is modified to Phosphoserine. Polar residues predominate over residues 400 to 410 (RTISPSTSNNI). A phosphoserine; by MAPK13 mark is found at Ser403 and Ser407. The PH domain maps to 428–547 (TVMKEGWMVH…WEVAIQHALM (120 aa)). A Phosphotyrosine modification is found at Tyr438. A Phosphoserine modification is found at Ser454. Residue Tyr469 is modified to Phosphotyrosine; by ABL. A Phosphotyrosine modification is found at Tyr508. Ser554 is modified (phosphoserine). The Protein kinase domain maps to 589-845 (IFPDEVLGSG…VDKTLSHPWL (257 aa)). Residues 595-603 (LGSGQFGIV) and Lys618 contribute to the ATP site. The Proton acceptor role is filled by Asp712. Phosphoserine; by PKC/PRKCD is present on Ser744. Ser748 bears the Phosphoserine; by autocatalysis and PKC/PRKCD mark. Tyr755 carries the phosphotyrosine modification. Ser916 is modified (phosphoserine; by autocatalysis).

This sequence belongs to the protein kinase superfamily. CAMK Ser/Thr protein kinase family. PKD subfamily. In terms of assembly, interacts (via N-terminus) with ADAP1/CENTA1. Interacts with MAPK13. Interacts with DAPK1 in an oxidative stress-regulated manner. Interacts with USP28; the interaction induces phosphorylation of USP28 and activated KRAS-mediated stabilization of ZNF304. Interacts with AKAP13 (via C-terminal domain). Requires Mg(2+) as cofactor. Post-translationally, phosphorylated at Ser-403 and Ser-407 by MAPK13 during regulation of insulin secretion in pancreatic beta cells. Phosphorylated by DAPK1. Phosphorylated at Tyr-93 and by ABL at Tyr-469, which primes the kinase in response to oxidative stress, and promotes a second step activating phosphorylation at Ser-744/Ser-748 by PKRD. Phosphorylated at Ser-916 upon S.enterica infection in macrophages.

The protein localises to the cytoplasm. It is found in the cell membrane. Its subcellular location is the golgi apparatus. It localises to the trans-Golgi network. It catalyses the reaction L-seryl-[protein] + ATP = O-phospho-L-seryl-[protein] + ADP + H(+). The enzyme catalyses L-threonyl-[protein] + ATP = O-phospho-L-threonyl-[protein] + ADP + H(+). With respect to regulation, activated by DAG and phorbol esters. Phorbol-ester/DAG-type domain 1 binds DAG with high affinity and appears to play the dominant role in mediating translocation to the cell membrane and trans-Golgi network. Phorbol-ester/DAG-type domain 2 binds phorbol ester with higher affinity. Autophosphorylation of Ser-748 and phosphorylation of Ser-744 by PKC relieves auto-inhibition by the PH domain. Phosphorylation on Tyr-469 by the SRC-ABL1 pathway in response to oxidative stress, is also required for activation. Activated by DAPK1 under oxidative stress. Serine/threonine-protein kinase that converts transient diacylglycerol (DAG) signals into prolonged physiological effects downstream of PKC, and is involved in the regulation of MAPK8/JNK1 and Ras signaling, Golgi membrane integrity and trafficking, cell survival through NF-kappa-B activation, cell migration, cell differentiation by mediating HDAC7 nuclear export, cell proliferation via MAPK1/3 (ERK1/2) signaling, and plays a role in cardiac hypertrophy, VEGFA-induced angiogenesis, genotoxic-induced apoptosis and flagellin-stimulated inflammatory response. Phosphorylates the epidermal growth factor receptor (EGFR) on dual threonine residues, which leads to the suppression of epidermal growth factor (EGF)-induced MAPK8/JNK1 activation and subsequent JUN phosphorylation. Phosphorylates RIN1, inducing RIN1 binding to 14-3-3 proteins YWHAB, YWHAE and YWHAZ and increased competition with RAF1 for binding to GTP-bound form of Ras proteins (NRAS, HRAS and KRAS). Acts downstream of the heterotrimeric G-protein beta/gamma-subunit complex to maintain the structural integrity of the Golgi membranes, and is required for protein transport along the secretory pathway. In the trans-Golgi network (TGN), regulates the fission of transport vesicles that are on their way to the plasma membrane. May act by activating the lipid kinase phosphatidylinositol 4-kinase beta (PI4KB) at the TGN for the local synthesis of phosphorylated inositol lipids, which induces a sequential production of DAG, phosphatidic acid (PA) and lyso-PA (LPA) that are necessary for membrane fission and generation of specific transport carriers to the cell surface. Under oxidative stress, is phosphorylated at Tyr-469 via SRC-ABL1 and contributes to cell survival by activating IKK complex and subsequent nuclear translocation and activation of NFKB1. Involved in cell migration by regulating integrin alpha-5/beta-3 recycling and promoting its recruitment in newly forming focal adhesion. In osteoblast differentiation, mediates the bone morphogenetic protein 2 (BMP2)-induced nuclear export of HDAC7, which results in the inhibition of HDAC7 transcriptional repression of RUNX2. In neurons, plays an important role in neuronal polarity by regulating the biogenesis of TGN-derived dendritic vesicles, and is involved in the maintenance of dendritic arborization and Golgi structure in hippocampal cells. May potentiate mitogenesis induced by the neuropeptide bombesin or vasopressin by mediating an increase in the duration of MAPK1/3 (ERK1/2) signaling, which leads to accumulation of immediate-early gene products including FOS that stimulate cell cycle progression. Plays an important role in the proliferative response induced by low calcium in keratinocytes, through sustained activation of MAPK1/3 (ERK1/2) pathway. Downstream of novel PKC signaling, plays a role in cardiac hypertrophy by phosphorylating HDAC5, which in turn triggers XPO1/CRM1-dependent nuclear export of HDAC5, MEF2A transcriptional activation and induction of downstream target genes that promote myocyte hypertrophy and pathological cardiac remodeling. Mediates cardiac troponin I (TNNI3) phosphorylation at the PKA sites, which results in reduced myofilament calcium sensitivity, and accelerated crossbridge cycling kinetics. The PRKD1-HDAC5 pathway is also involved in angiogenesis by mediating VEGFA-induced specific subset of gene expression, cell migration, and tube formation. In response to VEGFA, is necessary and required for HDAC7 phosphorylation which induces HDAC7 nuclear export and endothelial cell proliferation and migration. During apoptosis induced by cytarabine and other genotoxic agents, PRKD1 is cleaved by caspase-3 at Asp-378, resulting in activation of its kinase function and increased sensitivity of cells to the cytotoxic effects of genotoxic agents. In epithelial cells, is required for transducing flagellin-stimulated inflammatory responses by binding and phosphorylating TLR5, which contributes to MAPK14/p38 activation and production of inflammatory cytokines. Acts as an activator of NLRP3 inflammasome assembly by mediating phosphorylation of NLRP3. May play a role in inflammatory response by mediating activation of NF-kappa-B. May be involved in pain transmission by directly modulating TRPV1 receptor. Plays a role in activated KRAS-mediated stabilization of ZNF304 in colorectal cancer (CRC) cells. Regulates nuclear translocation of transcription factor TFEB in macrophages upon live S.enterica infection. The polypeptide is Serine/threonine-protein kinase D1 (Prkd1) (Mus musculus (Mouse)).